The following is a 267-amino-acid chain: CD82 antigen (267 aa).

At 1–11 the chain is on the cytoplasmic side; it reads MGSACIKVTKY. The S-palmitoyl cysteine moiety is linked to residue cysteine 5. Residues 12–32 form a helical membrane-spanning segment; the sequence is FLFLFNLIFFILGAVILGFGV. Residues 33-53 are Extracellular-facing; sequence WILADKSSFISVLQTSSSSLR. A helical transmembrane segment spans residues 54-72; it reads MGAYVFIGVGAVTMLMGFL. Residues 73 to 83 lie on the Cytoplasmic side of the membrane; that stretch reads GCIGAVNEVRC. Residue cysteine 74 is the site of S-palmitoyl cysteine attachment. The helical transmembrane segment at 84–110 threads the bilayer; it reads LLGLYFAFLLLILIAQVTAGALFYFNM. The Extracellular portion of the chain corresponds to 111–228; that stretch reads GKLKQEMGGI…KVQAWLQENL (118 aa). Asparagine 129, asparagine 157, and asparagine 198 each carry an N-linked (GlcNAc...) asparagine glycan. Residues 229 to 250 form a helical membrane-spanning segment; it reads GIILGVGVGVAIIELLGMVLSI. Residues 251 to 267 lie on the Cytoplasmic side of the membrane; it reads CLCRHVHSEDYSKVPKY.

The protein belongs to the tetraspanin (TM4SF) family. In terms of assembly, forms homooligomers. Interacts directly with IGSF8. Interacts with EGFR. Interacts with VEGFA and PDGFB. Interacts with ITGA4. Interacts with ITGA6; this interaction reduces ITGA6 cell surface expression. Interacts with ITGB1. Interacts with TLR4; this interaction inhibits TLR4-mediated signaling pathway. Interacts with TLR9. Interacts with PLAUR. Post-translationally, palmitoylated. Palmitoylation contributes to oligomerization and surface expression. Lymphoid specific.

The protein localises to the cell membrane. Its subcellular location is the cytoplasmic vesicle. The protein resides in the phagosome. In terms of biological role, structural component of specialized membrane microdomains known as tetraspanin-enriched microdomains (TERMs), which act as platforms for receptor clustering and signaling. Participates thereby in diverse biological functions such as cell signal transduction, adhesion, migration and protein trafficking. Acts as a attenuator of EGF signaling, facilitating ligand-induced endocytosis of the receptor and its subsequent desensitization. Mechanistically, modulates ligand-induced ubiquitination and trafficking of EGFR via E3 ligase CBL phosphorylation by PKC. Increases cell-matrix adhesion by regulating the membrane organization of integrin alpha4/ITA4. Modulates adhesion and suppresses cell migration through other integrins such as the alpha6/ITGA6 and beta1/ITGB1. Decreases cell-associated plasminogen activation by interfering with the interaction between urokinase-type plasminogen activator/PLAU and its receptor PLAUR. Associates with CD4 or CD8 and delivers costimulatory signals for the TCR/CD3 pathway. Plays a role in TLR9 trafficking to acidified CpG-containing compartments by controlling interaction between TLR9 and VAMP3 and subsequent myddosome assembly. Inhibits LPS-induced inflammatory response by preventing binding of LPS to TLR4 on the cell surface. Plays a role in the activation of macrophages into anti-inflammatory phenotypes. Independently of Toll-like receptor (TLR) signaling, is recruited to pathogen-containing phagosomes prior to fusion with lysosomes and thereby participates in antigen presentation. Also acts to control angiogenesis and switch angiogenic milieu to quiescent state by binding and sequestering VEGFA and PDGFB to inhibit the signaling they trigger via their respective cell surface receptor. The protein is CD82 antigen (CD82) of Homo sapiens (Human).